A 54-amino-acid chain; its full sequence is UPF0391 membrane protein Mpe_A2904 (54 aa).

Transmembrane regions (helical) follow at residues 5 to 25 and 30 to 50; these read AVVF…GIAA and IAKI…LFGL.

Belongs to the UPF0391 family.

It localises to the cell membrane. In Methylibium petroleiphilum (strain ATCC BAA-1232 / LMG 22953 / PM1), this protein is UPF0391 membrane protein Mpe_A2904.